Reading from the N-terminus, the 1059-residue chain is Carbamoyl phosphate synthase large chain (1059 aa).

Positions 1 to 401 (MPKRKDIQKI…SLLKACRSLE (401 aa)) are carboxyphosphate synthetic domain. 12 residues coordinate ATP: Arg-129, Arg-169, Gly-175, Gly-176, Arg-208, Ile-210, Glu-215, Gly-241, Ile-242, His-243, Gln-284, and Glu-298. Positions 133-327 (KQLMEELGQP…IAKLAAKIAV (195 aa)) constitute an ATP-grasp 1 domain. Positions 284, 298, and 300 each coordinate Mg(2+). 3 residues coordinate Mn(2+): Gln-284, Glu-298, and Asn-300. Residues 402 to 546 (VGVDHNELPA…YSTYGFENES (145 aa)) are oligomerization domain. A carbamoyl phosphate synthetic domain region spans residues 547–929 (VKSSKESVLV…ALYKAFEASY (383 aa)). The 191-residue stretch at 671–861 (EQALKELDIP…MAQVATRLIL (191 aa)) folds into the ATP-grasp 2 domain. ATP is bound by residues Arg-707, Ser-746, Ile-748, Glu-752, Gly-777, Val-778, His-779, Ser-780, Gln-820, and Glu-832. Mg(2+) contacts are provided by Gln-820, Glu-832, and Asn-834. Gln-820, Glu-832, and Asn-834 together coordinate Mn(2+). Residues 930-1059 (LHLPNFGNVV…ESRSFTTEAI (130 aa)) enclose the MGS-like domain. Residues 930 to 1059 (LHLPNFGNVV…ESRSFTTEAI (130 aa)) are allosteric domain.

Belongs to the CarB family. In terms of assembly, composed of two chains; the small (or glutamine) chain promotes the hydrolysis of glutamine to ammonia, which is used by the large (or ammonia) chain to synthesize carbamoyl phosphate. Tetramer of heterodimers (alpha,beta)4. Mg(2+) is required as a cofactor. The cofactor is Mn(2+).

It carries out the reaction hydrogencarbonate + L-glutamine + 2 ATP + H2O = carbamoyl phosphate + L-glutamate + 2 ADP + phosphate + 2 H(+). The enzyme catalyses hydrogencarbonate + NH4(+) + 2 ATP = carbamoyl phosphate + 2 ADP + phosphate + 2 H(+). It functions in the pathway amino-acid biosynthesis; L-arginine biosynthesis; carbamoyl phosphate from bicarbonate: step 1/1. The protein operates within pyrimidine metabolism; UMP biosynthesis via de novo pathway; (S)-dihydroorotate from bicarbonate: step 1/3. In terms of biological role, large subunit of the glutamine-dependent carbamoyl phosphate synthetase (CPSase). CPSase catalyzes the formation of carbamoyl phosphate from the ammonia moiety of glutamine, carbonate, and phosphate donated by ATP, constituting the first step of 2 biosynthetic pathways, one leading to arginine and/or urea and the other to pyrimidine nucleotides. The large subunit (synthetase) binds the substrates ammonia (free or transferred from glutamine from the small subunit), hydrogencarbonate and ATP and carries out an ATP-coupled ligase reaction, activating hydrogencarbonate by forming carboxy phosphate which reacts with ammonia to form carbamoyl phosphate. The chain is Carbamoyl phosphate synthase large chain from Streptococcus gordonii (strain Challis / ATCC 35105 / BCRC 15272 / CH1 / DL1 / V288).